The primary structure comprises 254 residues: Imidazole glycerol phosphate synthase subunit HisF (254 aa).

Residues aspartate 13 and aspartate 132 contribute to the active site.

The protein belongs to the HisA/HisF family. As to quaternary structure, heterodimer of HisH and HisF.

Its subcellular location is the cytoplasm. It carries out the reaction 5-[(5-phospho-1-deoxy-D-ribulos-1-ylimino)methylamino]-1-(5-phospho-beta-D-ribosyl)imidazole-4-carboxamide + L-glutamine = D-erythro-1-(imidazol-4-yl)glycerol 3-phosphate + 5-amino-1-(5-phospho-beta-D-ribosyl)imidazole-4-carboxamide + L-glutamate + H(+). It functions in the pathway amino-acid biosynthesis; L-histidine biosynthesis; L-histidine from 5-phospho-alpha-D-ribose 1-diphosphate: step 5/9. In terms of biological role, IGPS catalyzes the conversion of PRFAR and glutamine to IGP, AICAR and glutamate. The HisF subunit catalyzes the cyclization activity that produces IGP and AICAR from PRFAR using the ammonia provided by the HisH subunit. The polypeptide is Imidazole glycerol phosphate synthase subunit HisF (Sulfurovum sp. (strain NBC37-1)).